The sequence spans 468 residues: MGTGNSKENWRQSSFRSTSASSASPSSSSWASQQSYPQYGAESYNYPPPPSYAQPPEYTQPPPPLYSTQPYSAPSYSAPPSQSYGSDNKKRLERKYSKISDDYSSLEQVTEALARAGLESSNLIVGIDFTKSNEWTGARSFNRKSLHFIGSSPNPYEQAITIIGRTLAAFDEDNLIPCYGFGDASTHDQDVFSFNSEDRFCNGFEEVLSRYKEIVPQLKLAGPTSFAPIIDMAMTIVEQSGGQYHVLVIIADGQVTRSVDTENGQLSPQEQKTVDAIVQASKLPLSIVLVGVGDGPWDMMREFDDNIPARAFDNFQFVNFTEIMAKNKAQSLKETEFALSALMEIPQQYKATIELNLLGRRNGYIPERFPLPPPMRGGSSSYNSPKPSRLPSFKPSVPPHPTEGYHVRSSPVPPPTSSASDNQLCPICLSNPKDMAFGCGHQTCCECGPDLQMCPICRAPIQTRIKLY.

The interval 1–89 (MGTGNSKENW…PSQSYGSDNK (89 aa)) is disordered. Gly-2 carries N-myristoyl glycine lipidation. A compositionally biased stretch (low complexity) spans 12-45 (QSSFRSTSASSASPSSSSWASQQSYPQYGAESYN). Over residues 46–65 (YPPPPSYAQPPEYTQPPPPL) the composition is skewed to pro residues. Over residues 66-84 (YSTQPYSAPSYSAPPSQSY) the composition is skewed to low complexity. Residues 122–342 (NLIVGIDFTK…KETEFALSAL (221 aa)) enclose the VWFA domain. The tract at residues 369–416 (FPLPPPMRGGSSSYNSPKPSRLPSFKPSVPPHPTEGYHVRSSPVPPPT) is disordered. The segment at 425 to 458 (CPICLSNPKDMAFGCGHQTCCECGPDLQMCPICR) adopts an RING-type zinc-finger fold.

As to quaternary structure, interacts with the heterodimer UBC35/UEV1B, UBC35 alone, PIN1, but not with UCB2, UCB9, UEV1B or UEV1C alone. Interacts with ERF053. Post-translationally, N-myristoylated. Ubiquitously expressed.

It localises to the cell membrane. Its subcellular location is the nucleus. It catalyses the reaction S-ubiquitinyl-[E2 ubiquitin-conjugating enzyme]-L-cysteine + [acceptor protein]-L-lysine = [E2 ubiquitin-conjugating enzyme]-L-cysteine + N(6)-ubiquitinyl-[acceptor protein]-L-lysine.. Its function is as follows. E3 ubiquitin-protein ligase that mediates the formation of 'Lys-63'-linked ubiquitin chains. Regulates apical dominance by acting on the auxin transport proteins abundance. Mediates ubiquitination and subsequent proteasomal degradation of ERF053 in response to drought stress. Acts as a negative regulator of drought stress response. This chain is E3 ubiquitin-protein ligase RGLG2, found in Arabidopsis thaliana (Mouse-ear cress).